A 387-amino-acid polypeptide reads, in one-letter code: Flap endonuclease 1 (387 aa).

Residues 1-104 are N-domain; the sequence is MGILGLSKLI…GELAKRAERR (104 aa). Asp34 is a binding site for Mg(2+). Arg47 and Arg70 together coordinate DNA. Residues Asp86, Glu158, Glu160, Asp179, and Asp181 each coordinate Mg(2+). Residues 122 to 253 form an I-domain region; the sequence is GIEKFNRRLV…KRAIELINNY (132 aa). Glu158 is a DNA binding site. DNA-binding residues include Gly231 and Asp233. Asp233 serves as a coordination point for Mg(2+). An interaction with PCNA region spans residues 336–344; sequence TQVRLDSFF. The segment at 346–387 is disordered; it reads TLPSTPNATNAAKRKAEEAKKSANNKKAKTSGGVGGRGRRPK.

It belongs to the XPG/RAD2 endonuclease family. FEN1 subfamily. Interacts with PCNA. Three molecules of FEN1 bind to one PCNA trimer with each molecule binding to one PCNA monomer. PCNA stimulates the nuclease activity without altering cleavage specificity. It depends on Mg(2+) as a cofactor. Phosphorylated. Phosphorylation upon DNA damage induces relocalization to the nuclear plasma.

The protein localises to the nucleus. It localises to the nucleolus. It is found in the nucleoplasm. Its subcellular location is the mitochondrion. Functionally, structure-specific nuclease with 5'-flap endonuclease and 5'-3' exonuclease activities involved in DNA replication and repair. During DNA replication, cleaves the 5'-overhanging flap structure that is generated by displacement synthesis when DNA polymerase encounters the 5'-end of a downstream Okazaki fragment. It enters the flap from the 5'-end and then tracks to cleave the flap base, leaving a nick for ligation. Also involved in the long patch base excision repair (LP-BER) pathway, by cleaving within the apurinic/apyrimidinic (AP) site-terminated flap. Acts as a genome stabilization factor that prevents flaps from equilibrating into structures that lead to duplications and deletions. Also possesses 5'-3' exonuclease activity on nicked or gapped double-stranded DNA, and exhibits RNase H activity. Also involved in replication and repair of rDNA and in repairing mitochondrial DNA. The protein is Flap endonuclease 1 of Drosophila erecta (Fruit fly).